We begin with the raw amino-acid sequence, 301 residues long: Probable porphobilinogen deaminase (301 aa).

Residue Cys241 is modified to S-(dipyrrolylmethanemethyl)cysteine.

The protein belongs to the HMBS family. Dipyrromethane is required as a cofactor.

It carries out the reaction 4 porphobilinogen + H2O = hydroxymethylbilane + 4 NH4(+). Its pathway is porphyrin-containing compound metabolism; protoporphyrin-IX biosynthesis; coproporphyrinogen-III from 5-aminolevulinate: step 2/4. In terms of biological role, tetrapolymerization of the monopyrrole PBG into the hydroxymethylbilane pre-uroporphyrinogen in several discrete steps. This is Probable porphobilinogen deaminase from Pyrobaculum islandicum (strain DSM 4184 / JCM 9189 / GEO3).